The chain runs to 340 residues: Adenosine receptor A2b (340 aa).

Residues 1–6 (MNTMKT) are Extracellular-facing. Residues 7 to 31 (TYIVLELIIAVLSIAGNVLVCWAVA) traverse the membrane as a helical segment. Residues 32-41 (INSTLKNATN) are Cytoplasmic-facing. The chain crosses the membrane as a helical span at residues 42 to 65 (YFLVSLAVADIAVGLLAIPFAITI). The Extracellular portion of the chain corresponds to 66 to 76 (SIGFQVDFHSC). The cysteines at positions 76 and 171 are disulfide-linked. The chain crosses the membrane as a helical span at residues 77–99 (LFFACFVLVLTQSSIFSLLAVAI). Residues 100–119 (DRYLAIKIPLRYNSLVTGKR) are Cytoplasmic-facing. The chain crosses the membrane as a helical span at residues 120-142 (ARGLIAVLWLLSFVIGLTPLMGW). Residues 143 to 178 (NKAMSGCPNSTNETGADHGAGHHGCFISCLFENVVT) lie on the Extracellular side of the membrane. N-linked (GlcNAc...) asparagine glycosylation is found at Asn151 and Asn154. Residue Glu174 coordinates adenosine. A helical membrane pass occupies residues 179–203 (MSYMVYFNFFGCVLLPLIIMLGIYI). Residues 204-235 (KIFMVACKQLHQIELMGNSRTTLQKEVHAAKS) lie on the Cytoplasmic side of the membrane. A helical membrane pass occupies residues 236–259 (LAIIVGLFAFCWLPLHILNCITHF). Position 254 (Asn254) interacts with adenosine. Residues 260 to 267 (HEEFSKSK) lie on the Extracellular side of the membrane. Residues 268–291 (PEWVMYVAIILSHANSVINPIIYA) form a helical membrane-spanning segment. Adenosine-binding residues include Ser279 and His280. Residues 292–340 (YRIRDFRYTFHKIISKILCKTDDFPKCTTDNNQHLTVTNVNAPAASVTI) lie on the Cytoplasmic side of the membrane. Cys310 is lipidated: S-palmitoyl cysteine.

The protein belongs to the G-protein coupled receptor 1 family.

Its subcellular location is the cell membrane. Its function is as follows. Receptor for adenosine. The activity of this receptor is mediated by G proteins which activate adenylyl cyclase. The polypeptide is Adenosine receptor A2b (ADORA2B) (Gallus gallus (Chicken)).